The chain runs to 339 residues: Anthranilate phosphoribosyltransferase (339 aa).

Residues Gly-79, 82–83 (GD), Ser-87, 89–92 (NIST), 107–115 (KHGNRSISS), and Ser-119 contribute to the 5-phospho-alpha-D-ribose 1-diphosphate site. Residue Gly-79 coordinates anthranilate. Mg(2+) is bound at residue Ser-91. Anthranilate is bound at residue Asn-110. Anthranilate is bound at residue Arg-165. Asp-224 and Glu-225 together coordinate Mg(2+).

Belongs to the anthranilate phosphoribosyltransferase family. In terms of assembly, homodimer. It depends on Mg(2+) as a cofactor.

It carries out the reaction N-(5-phospho-beta-D-ribosyl)anthranilate + diphosphate = 5-phospho-alpha-D-ribose 1-diphosphate + anthranilate. It participates in amino-acid biosynthesis; L-tryptophan biosynthesis; L-tryptophan from chorismate: step 2/5. In terms of biological role, catalyzes the transfer of the phosphoribosyl group of 5-phosphorylribose-1-pyrophosphate (PRPP) to anthranilate to yield N-(5'-phosphoribosyl)-anthranilate (PRA). The sequence is that of Anthranilate phosphoribosyltransferase from Listeria innocua serovar 6a (strain ATCC BAA-680 / CLIP 11262).